Consider the following 47-residue polypeptide: Delta-ctenitoxin-Asp2e (47 aa).

5 disulfide bridges follow: cysteine 3–cysteine 17, cysteine 10–cysteine 23, cysteine 14–cysteine 46, cysteine 16–cysteine 31, and cysteine 25–cysteine 29.

Expressed by the venom gland.

It localises to the secreted. Its function is as follows. Inhibits the inactivation of voltage-gated sodium channels (Nav). The polypeptide is Delta-ctenitoxin-Asp2e (Ancylometes sp. (South American fishing spider)).